Here is a 141-residue protein sequence, read N- to C-terminus: Nucleoside diphosphate kinase (141 aa).

Positions 11, 59, 87, 93, 104, and 114 each coordinate ATP. Histidine 117 acts as the Pros-phosphohistidine intermediate in catalysis.

The protein belongs to the NDK family. In terms of assembly, homotetramer. It depends on Mg(2+) as a cofactor.

The protein localises to the cytoplasm. The enzyme catalyses a 2'-deoxyribonucleoside 5'-diphosphate + ATP = a 2'-deoxyribonucleoside 5'-triphosphate + ADP. It catalyses the reaction a ribonucleoside 5'-diphosphate + ATP = a ribonucleoside 5'-triphosphate + ADP. Its function is as follows. Major role in the synthesis of nucleoside triphosphates other than ATP. The ATP gamma phosphate is transferred to the NDP beta phosphate via a ping-pong mechanism, using a phosphorylated active-site intermediate. The sequence is that of Nucleoside diphosphate kinase from Polaromonas sp. (strain JS666 / ATCC BAA-500).